The following is a 24-amino-acid chain: Brevinin-1GRa (24 aa).

In terms of tissue distribution, expressed by the skin glands.

The protein resides in the secreted. Functionally, antimicrobial peptide active against the Gram-positive bacterium S.aureus (MIC=12.5 uM) and against the Gram-negative bacteria E.coli (MIC=25 uM). This is Brevinin-1GRa from Odorrana grahami (Yunnanfu frog).